A 144-amino-acid chain; its full sequence is Large ribosomal subunit protein uL15 (144 aa).

A disordered region spans residues 1 to 57; that stretch reads MELNNIKPADGAKKDKRRVGRGIGSGLGKTAGRGHKGQKSRAGGFHKVGFEGGQMPM. Residues 21 to 31 show a composition bias toward gly residues; the sequence is RGIGSGLGKTA.

Belongs to the universal ribosomal protein uL15 family. As to quaternary structure, part of the 50S ribosomal subunit.

Binds to the 23S rRNA. The sequence is that of Large ribosomal subunit protein uL15 from Thiobacillus denitrificans (strain ATCC 25259 / T1).